The following is a 437-amino-acid chain: Trigger factor (437 aa).

Residues 161–246 form the PPIase FKBP-type domain; the sequence is DDQVNIDFVG…VNSVSAPVLP (86 aa).

The protein belongs to the FKBP-type PPIase family. Tig subfamily.

The protein resides in the cytoplasm. The catalysed reaction is [protein]-peptidylproline (omega=180) = [protein]-peptidylproline (omega=0). Functionally, involved in protein export. Acts as a chaperone by maintaining the newly synthesized protein in an open conformation. Functions as a peptidyl-prolyl cis-trans isomerase. The sequence is that of Trigger factor from Pseudomonas putida (strain ATCC 47054 / DSM 6125 / CFBP 8728 / NCIMB 11950 / KT2440).